The chain runs to 217 residues: Small ribosomal subunit protein uS3 (217 aa).

The region spanning Ile-38–Lys-106 is the KH type-2 domain.

It belongs to the universal ribosomal protein uS3 family. In terms of assembly, part of the 30S ribosomal subunit. Forms a tight complex with proteins S10 and S14.

Its function is as follows. Binds the lower part of the 30S subunit head. Binds mRNA in the 70S ribosome, positioning it for translation. The chain is Small ribosomal subunit protein uS3 from Lactiplantibacillus plantarum (strain ATCC BAA-793 / NCIMB 8826 / WCFS1) (Lactobacillus plantarum).